Consider the following 426-residue polypeptide: 3-phosphoshikimate 1-carboxyvinyltransferase (426 aa).

Residues Lys22, Ser23, and Arg27 each contribute to the 3-phosphoshikimate site. Lys22 contacts phosphoenolpyruvate. The phosphoenolpyruvate site is built by Gly96 and Arg124. 7 residues coordinate 3-phosphoshikimate: Ser170, Ser171, Gln172, Ser198, Asp314, Asn337, and Lys341. A phosphoenolpyruvate-binding site is contributed by Gln172. Asp314 (proton acceptor) is an active-site residue. Positions 345, 387, and 412 each coordinate phosphoenolpyruvate.

Belongs to the EPSP synthase family. Monomer.

It is found in the cytoplasm. The catalysed reaction is 3-phosphoshikimate + phosphoenolpyruvate = 5-O-(1-carboxyvinyl)-3-phosphoshikimate + phosphate. Its pathway is metabolic intermediate biosynthesis; chorismate biosynthesis; chorismate from D-erythrose 4-phosphate and phosphoenolpyruvate: step 6/7. Functionally, catalyzes the transfer of the enolpyruvyl moiety of phosphoenolpyruvate (PEP) to the 5-hydroxyl of shikimate-3-phosphate (S3P) to produce enolpyruvyl shikimate-3-phosphate and inorganic phosphate. The chain is 3-phosphoshikimate 1-carboxyvinyltransferase from Shewanella sp. (strain MR-7).